A 1191-amino-acid polypeptide reads, in one-letter code: DNA-directed RNA polymerase subunit beta (1191 aa).

Positions 1171 to 1181 are enriched in basic and acidic residues; it reads RVKQEAEEKQA. Residues 1171–1191 are disordered; that stretch reads RVKQEAEEKQAEQVSEVVQED. Low complexity predominate over residues 1182–1191; that stretch reads EQVSEVVQED.

Belongs to the RNA polymerase beta chain family. In terms of assembly, the RNAP catalytic core consists of 2 alpha, 1 beta, 1 beta' and 1 omega subunit. When a sigma factor is associated with the core the holoenzyme is formed, which can initiate transcription.

The catalysed reaction is RNA(n) + a ribonucleoside 5'-triphosphate = RNA(n+1) + diphosphate. DNA-dependent RNA polymerase catalyzes the transcription of DNA into RNA using the four ribonucleoside triphosphates as substrates. The protein is DNA-directed RNA polymerase subunit beta of Streptococcus agalactiae serotype Ia (strain ATCC 27591 / A909 / CDC SS700).